The sequence spans 140 residues: Large ribosomal subunit protein uL16 (140 aa).

Belongs to the universal ribosomal protein uL16 family. As to quaternary structure, part of the 50S ribosomal subunit.

Its function is as follows. Binds 23S rRNA and is also seen to make contacts with the A and possibly P site tRNAs. The polypeptide is Large ribosomal subunit protein uL16 (Onion yellows phytoplasma (strain OY-M)).